The following is a 347-amino-acid chain: NADH-ubiquinone oxidoreductase chain 2 (347 aa).

The next 10 membrane-spanning stretches (helical) occupy residues 13–33, 56–76, 96–116, 123–143, 149–169, 178–198, 201–221, 247–267, 274–294, and 326–346; these read IFAG…WVGL, AIKY…AILF, LMIM…FWVP, PLTS…SIMY, LNVS…SWGG, ILAY…PYNP, TILN…LLNL, TLLS…WAII, NSLI…YFYL, and LPTL…MLMI.

It belongs to the complex I subunit 2 family. Core subunit of respiratory chain NADH dehydrogenase (Complex I) which is composed of 45 different subunits. Interacts with TMEM242.

The protein localises to the mitochondrion inner membrane. The catalysed reaction is a ubiquinone + NADH + 5 H(+)(in) = a ubiquinol + NAD(+) + 4 H(+)(out). Its function is as follows. Core subunit of the mitochondrial membrane respiratory chain NADH dehydrogenase (Complex I) which catalyzes electron transfer from NADH through the respiratory chain, using ubiquinone as an electron acceptor. Essential for the catalytic activity and assembly of complex I. This chain is NADH-ubiquinone oxidoreductase chain 2, found in Homo sapiens (Human).